Consider the following 104-residue polypeptide: Large ribosomal subunit protein uL24 (104 aa).

The protein belongs to the universal ribosomal protein uL24 family. As to quaternary structure, part of the 50S ribosomal subunit.

In terms of biological role, one of two assembly initiator proteins, it binds directly to the 5'-end of the 23S rRNA, where it nucleates assembly of the 50S subunit. Functionally, one of the proteins that surrounds the polypeptide exit tunnel on the outside of the subunit. This Idiomarina loihiensis (strain ATCC BAA-735 / DSM 15497 / L2-TR) protein is Large ribosomal subunit protein uL24.